The primary structure comprises 32 residues: Conotoxin pr6b (32 aa).

4-hydroxyproline is present on residues Pro6, Pro13, Pro20, and Pro29. 3 disulfides stabilise this stretch: Cys7/Cys18, Cys14/Cys23, and Cys17/Cys31.

Expressed by the venom duct.

It is found in the secreted. Its function is as follows. Intraperitoneal injection into fish (0.5 nmol) provokes vertical suspension and paralysis after 6 minutes. This is Conotoxin pr6b from Conus parius (Cone snail).